Here is a 218-residue protein sequence, read N- to C-terminus: Elongation factor Ts (218 aa).

Residues 82 to 85 (TDFV) are involved in Mg(2+) ion dislocation from EF-Tu.

This sequence belongs to the EF-Ts family.

Its subcellular location is the cytoplasm. Its function is as follows. Associates with the EF-Tu.GDP complex and induces the exchange of GDP to GTP. It remains bound to the aminoacyl-tRNA.EF-Tu.GTP complex up to the GTP hydrolysis stage on the ribosome. The chain is Elongation factor Ts from Prochlorococcus marinus (strain NATL1A).